Reading from the N-terminus, the 342-residue chain is Phosphate acyltransferase (342 aa).

It belongs to the PlsX family. Homodimer. Probably interacts with PlsY.

The protein resides in the cytoplasm. The catalysed reaction is a fatty acyl-[ACP] + phosphate = an acyl phosphate + holo-[ACP]. It functions in the pathway lipid metabolism; phospholipid metabolism. Functionally, catalyzes the reversible formation of acyl-phosphate (acyl-PO(4)) from acyl-[acyl-carrier-protein] (acyl-ACP). This enzyme utilizes acyl-ACP as fatty acyl donor, but not acyl-CoA. In Legionella pneumophila (strain Corby), this protein is Phosphate acyltransferase.